Here is a 304-residue protein sequence, read N- to C-terminus: D-alanine--D-alanine ligase (304 aa).

The region spanning 103–299 is the ATP-grasp domain; it reads KLIWQALGLP…FADLCIEILK (197 aa). 129 to 184 contacts ATP; it reads EEKLGLPMFVKPAAEGSSVGVVKVKEKGRLKSVYEELKHLQGEIIAERFIGGGEYS. 3 residues coordinate Mg(2+): Asp253, Glu266, and Asn268.

It belongs to the D-alanine--D-alanine ligase family. Mg(2+) serves as cofactor. The cofactor is Mn(2+).

Its subcellular location is the cytoplasm. The enzyme catalyses 2 D-alanine + ATP = D-alanyl-D-alanine + ADP + phosphate + H(+). The protein operates within cell wall biogenesis; peptidoglycan biosynthesis. Its function is as follows. Cell wall formation. This Neisseria gonorrhoeae (strain ATCC 700825 / FA 1090) protein is D-alanine--D-alanine ligase.